The sequence spans 144 residues: Large ribosomal subunit protein uL15 (144 aa).

A disordered region spans residues 1–48 (MIKLESLQDPSPRKRRTKLLGRGPSSGHGKTSCRGHKGDGSRSGYKRR).

It belongs to the universal ribosomal protein uL15 family. Part of the 50S ribosomal subunit.

Functionally, binds to the 23S rRNA. This chain is Large ribosomal subunit protein uL15, found in Chlamydia abortus (strain DSM 27085 / S26/3) (Chlamydophila abortus).